The following is a 446-amino-acid chain: Sorting nexin-30 (446 aa).

A compositionally biased stretch (polar residues) spans 1-18 (MSGSSTPKSLPTSGQQSL). A disordered region spans residues 1–84 (MSGSSTPKSL…SSPASSSSLL (84 aa)). Low complexity predominate over residues 70-84 (TPADTSSPASSSSLL). The PX domain occupies 98 to 219 (RDLFVTVDDP…VFLTAKDLNS (122 aa)). A 1,2-diacyl-sn-glycero-3-phospho-(1D-myo-inositol-3-phosphate) contacts are provided by arginine 141, glutamine 143, lysine 171, and arginine 185. The BAR domain maps to 243–446 (KLRNRPVEFA…PLLQDKQEPK (204 aa)).

This sequence belongs to the sorting nexin family.

It is found in the early endosome membrane. In terms of biological role, involved in the regulation of endocytosis and in several stages of intracellular trafficking. Together with snx4, involved in autophagosome assembly. The protein is Sorting nexin-30 (snx30) of Xenopus tropicalis (Western clawed frog).